We begin with the raw amino-acid sequence, 118 residues long: Small ribosomal subunit protein uS13 (118 aa).

The tract at residues 94–118 (SLPLRGQRTKTNARTRKGPRKPIRK) is disordered.

This sequence belongs to the universal ribosomal protein uS13 family. Part of the 30S ribosomal subunit. Forms a loose heterodimer with protein S19. Forms two bridges to the 50S subunit in the 70S ribosome.

Its function is as follows. Located at the top of the head of the 30S subunit, it contacts several helices of the 16S rRNA. In the 70S ribosome it contacts the 23S rRNA (bridge B1a) and protein L5 of the 50S subunit (bridge B1b), connecting the 2 subunits; these bridges are implicated in subunit movement. Contacts the tRNAs in the A and P-sites. This is Small ribosomal subunit protein uS13 from Shewanella halifaxensis (strain HAW-EB4).